Reading from the N-terminus, the 469-residue chain is Putative diacyglycerol O-acyltransferase MT0231 (469 aa).

Catalysis depends on His139, which acts as the Proton acceptor.

The protein belongs to the long-chain O-acyltransferase family.

It carries out the reaction an acyl-CoA + a 1,2-diacyl-sn-glycerol = a triacyl-sn-glycerol + CoA. It functions in the pathway glycerolipid metabolism; triacylglycerol biosynthesis. The sequence is that of Putative diacyglycerol O-acyltransferase MT0231 from Mycobacterium tuberculosis (strain CDC 1551 / Oshkosh).